A 40-amino-acid polypeptide reads, in one-letter code: Photosystem II reaction center protein J (40 aa).

Residues 8 to 28 (IPLWVIGTVAGILVIGIIGIF) traverse the membrane as a helical segment.

The protein belongs to the PsbJ family. In terms of assembly, PSII is composed of 1 copy each of membrane proteins PsbA, PsbB, PsbC, PsbD, PsbE, PsbF, PsbH, PsbI, PsbJ, PsbK, PsbL, PsbM, PsbT, PsbX, PsbY, PsbZ, Psb30/Ycf12, at least 3 peripheral proteins of the oxygen-evolving complex and a large number of cofactors. It forms dimeric complexes.

The protein localises to the plastid. It is found in the chloroplast thylakoid membrane. Its function is as follows. One of the components of the core complex of photosystem II (PSII). PSII is a light-driven water:plastoquinone oxidoreductase that uses light energy to abstract electrons from H(2)O, generating O(2) and a proton gradient subsequently used for ATP formation. It consists of a core antenna complex that captures photons, and an electron transfer chain that converts photonic excitation into a charge separation. The sequence is that of Photosystem II reaction center protein J from Lobularia maritima (Sweet alyssum).